Consider the following 336-residue polypeptide: Flavonoid 6-O-methyltransferase 4 (336 aa).

S-adenosyl-L-methionine contacts are provided by Y140 and D203. H241 functions as the Proton acceptor in the catalytic mechanism.

The protein belongs to the class I-like SAM-binding methyltransferase superfamily. Cation-independent O-methyltransferase family. In terms of assembly, homodimer. In terms of tissue distribution, expressed in leaves.

It carries out the reaction ladanein + S-adenosyl-L-methionine = salvigenin + S-adenosyl-L-homocysteine + H(+). The enzyme catalyses scutellarein 7-methyl ether + S-adenosyl-L-methionine = cirsimaritin + S-adenosyl-L-homocysteine + H(+). The protein operates within flavonoid metabolism. In terms of biological role, flavonoid 6-O-methyltransferase involved in the biosynthesis of polymethoxylated flavonoids natural products such as nevadensin and salvigenin (SALV), aroma compounds which contribute to the flavor of sweet basil, and exhibit pharmacological activities such as anti-allergic, anti-oxidant, antibacterial, anti-proliferative, and anti-inflammatory effects. Catalyzes S-adenosylmethionine-dependent regioselective 6-O-methylation of flavonoids; active on various hydroxylated flavonoid substrates, including scutellarein-7-methyl ether (SCU7Me) and ladanein (LAD). The polypeptide is Flavonoid 6-O-methyltransferase 4 (Ocimum basilicum (Sweet basil)).